We begin with the raw amino-acid sequence, 285 residues long: Transmembrane protein DDB_G0269096 (285 aa).

Disordered stretches follow at residues 1–25 and 59–87; these read MEDR…MSQS and SFEN…NNKN. Low complexity-rich tracts occupy residues 12–25 and 65–85; these read SDIS…MSQS and NNNN…NNNN. 5 helical membrane-spanning segments follow: residues 124–144, 152–172, 182–202, 205–225, and 250–270; these read LEEI…LALI, AQMQ…FGVP, LIMG…ALVY, ANFE…MQFT, and FYFI…TALV.

It is found in the membrane. This is Transmembrane protein DDB_G0269096 from Dictyostelium discoideum (Social amoeba).